A 418-amino-acid chain; its full sequence is Peptide chain release factor subunit 1 (418 aa).

It belongs to the eukaryotic release factor 1 family. Heterodimer of two subunits, one of which binds GTP.

It is found in the cytoplasm. Functionally, directs the termination of nascent peptide synthesis (translation) in response to the termination codons UAA, UAG and UGA. The polypeptide is Peptide chain release factor subunit 1 (Haloarcula marismortui (strain ATCC 43049 / DSM 3752 / JCM 8966 / VKM B-1809) (Halobacterium marismortui)).